Consider the following 205-residue polypeptide: Holliday junction branch migration complex subunit RuvA (205 aa).

The domain I stretch occupies residues 1–64; that stretch reads MIGRLRGLLV…EDAQLLYGFI (64 aa). Residues 65 to 143 form a domain II region; it reads TKQERALFRL…SLMEASAGSE (79 aa). Residues 144–156 form a flexible linker region; sequence REFMLKSNYTPAP. Positions 157-205 are domain III; sequence VINTAEEDAIAALLSLGYKPAQASKAVSAVYQDGMDSETLIKSSLKSML.

This sequence belongs to the RuvA family. In terms of assembly, homotetramer. Forms an RuvA(8)-RuvB(12)-Holliday junction (HJ) complex. HJ DNA is sandwiched between 2 RuvA tetramers; dsDNA enters through RuvA and exits via RuvB. An RuvB hexamer assembles on each DNA strand where it exits the tetramer. Each RuvB hexamer is contacted by two RuvA subunits (via domain III) on 2 adjacent RuvB subunits; this complex drives branch migration. In the full resolvosome a probable DNA-RuvA(4)-RuvB(12)-RuvC(2) complex forms which resolves the HJ.

It is found in the cytoplasm. The RuvA-RuvB-RuvC complex processes Holliday junction (HJ) DNA during genetic recombination and DNA repair, while the RuvA-RuvB complex plays an important role in the rescue of blocked DNA replication forks via replication fork reversal (RFR). RuvA specifically binds to HJ cruciform DNA, conferring on it an open structure. The RuvB hexamer acts as an ATP-dependent pump, pulling dsDNA into and through the RuvAB complex. HJ branch migration allows RuvC to scan DNA until it finds its consensus sequence, where it cleaves and resolves the cruciform DNA. This is Holliday junction branch migration complex subunit RuvA from Shewanella sediminis (strain HAW-EB3).